A 75-amino-acid polypeptide reads, in one-letter code: Small ribosomal subunit protein bS18 (75 aa).

It belongs to the bacterial ribosomal protein bS18 family. As to quaternary structure, part of the 30S ribosomal subunit. Forms a tight heterodimer with protein bS6.

Binds as a heterodimer with protein bS6 to the central domain of the 16S rRNA, where it helps stabilize the platform of the 30S subunit. The sequence is that of Small ribosomal subunit protein bS18 from Cellvibrio japonicus (strain Ueda107) (Pseudomonas fluorescens subsp. cellulosa).